We begin with the raw amino-acid sequence, 426 residues long: Spermidine/putrescine import ATP-binding protein PotA (426 aa).

The region spanning 6 to 238 (IEFKNVSKTY…PINHFVADFI (233 aa)) is the ABC transporter domain. Position 40-47 (40-47 (GASGSGKS)) interacts with ATP.

Belongs to the ABC transporter superfamily. Spermidine/putrescine importer (TC 3.A.1.11.1) family. The complex is composed of two ATP-binding proteins (PotA), two transmembrane proteins (PotB and PotC) and a solute-binding protein (PotD).

The protein localises to the cell membrane. It catalyses the reaction ATP + H2O + polyamine-[polyamine-binding protein]Side 1 = ADP + phosphate + polyamineSide 2 + [polyamine-binding protein]Side 1.. Part of the ABC transporter complex PotABCD involved in spermidine/putrescine import. Responsible for energy coupling to the transport system. This Lactococcus lactis subsp. cremoris (strain SK11) protein is Spermidine/putrescine import ATP-binding protein PotA.